We begin with the raw amino-acid sequence, 288 residues long: Bifunctional protein MdtA (288 aa).

Residues 129 to 132 (TGPV), 152 to 156 (RKLDK), 195 to 198 (TAGA), and Lys-256 each bind NADP(+).

Homotrimer.

It localises to the cytoplasm. The enzyme catalyses 5,10-methylenetetrahydromethanopterin + NADP(+) = 5,10-methenyl-5,6,7,8-tetrahydromethanopterin + NADPH. It carries out the reaction (6R)-5,10-methylene-5,6,7,8-tetrahydrofolate + NADP(+) = (6R)-5,10-methenyltetrahydrofolate + NADPH. It participates in one-carbon metabolism; formaldehyde degradation; formate from formaldehyde (H(4)MPT route): step 2/5. Functionally, catalyzes the dehydrogenation of methylene-H(4)MPT. Can also catalyze the reversible dehydrogenation of methylene-H(4)F with 20-fold lower catalytic efficiency. The protein is Bifunctional protein MdtA of Methylorubrum extorquens (strain ATCC 14718 / DSM 1338 / JCM 2805 / NCIMB 9133 / AM1) (Methylobacterium extorquens).